The sequence spans 197 residues: Protein TIFY 9 (197 aa).

Residues 57 to 73 are compositionally biased toward polar residues; the sequence is STGNNSDSSAKSRSVPS. Residues 57 to 84 form a disordered region; that stretch reads STGNNSDSSAKSRSVPSTPREDQPQIPI. One can recognise a Tify domain in the interval 98–132; the sequence is LVSGTVPMTIFYNGSVSVFQVSRNKAGEIMKVANE. Positions 168-193 match the Jas motif; that stretch reads PIARRKSLQRFLEKRKERLVSTSPYY. The Nuclear localization signal motif lies at 170–177; the sequence is ARRKSLQR.

The protein belongs to the TIFY/JAZ family. As to quaternary structure, homo- and heterodimer. Interacts with MYC2, MYC3, MYC4, AFPH2/NINJA, TIFY10A/JAZ1, TIFY10B/JAZ2, TIFY6B/JAZ3, TIFY6A/JAZ4, TIFY11B/JAZ6, TIFY5A/JAZ8, TIFY7/JAZ9, TIFY3A/JAZ11 and TIFY3B/JAZ12. Isoform 1 and isoform 2 interact with COI1. Isoform 3 does not interact with COI1. Interacts with RHD6 and RSL1. In terms of processing, ubiquitinated. Targeted for degradation by the SCF(COI1) E3 ubiquitin ligase-proteasome pathway during jasmonate signaling.

It is found in the nucleus. In terms of biological role, repressor of jasmonate (JA) responses that lacks the entire Jas domain and possesses severe JA insensitivity and resistance to JA-induced degradation. Acts as an endogenous repressor of JA signal output in JA-stimulated cells. Modulator of JA-controlled growth inhibition in response to wounding. Its function is as follows. Repressor of jasmonate (JA) responses that lacks part of the Jas domain and possesses JA insensitivity and partial resistance to JA-induced degradation. Repressor of jasmonate (JA) responses. Interacts with and suppresses RHD6 and RSL1 transcription factor activities to negatively regulate jasmonate-stimulated root hair development. The protein is Protein TIFY 9 (TIFY9) of Arabidopsis thaliana (Mouse-ear cress).